The sequence spans 265 residues: tRNA (guanine-N(1)-)-methyltransferase (265 aa).

Residues Gly119 and 139–144 each bind S-adenosyl-L-methionine; that span reads VGDYIL.

This sequence belongs to the RNA methyltransferase TrmD family. Homodimer.

It is found in the cytoplasm. It catalyses the reaction guanosine(37) in tRNA + S-adenosyl-L-methionine = N(1)-methylguanosine(37) in tRNA + S-adenosyl-L-homocysteine + H(+). Its function is as follows. Specifically methylates guanosine-37 in various tRNAs. The polypeptide is tRNA (guanine-N(1)-)-methyltransferase (Pseudoalteromonas atlantica (strain T6c / ATCC BAA-1087)).